A 429-amino-acid polypeptide reads, in one-letter code: Cholesterol 7-desaturase nvd (429 aa).

A helical membrane pass occupies residues 23–43 (FVICLWTLAVTFIRIYWIFFV). In terms of domain architecture, Rieske spans 98 to 201 (YGILKSSQLK…SQEVDGFIFI (104 aa)). [2Fe-2S] cluster contacts are provided by Cys138, His140, Cys158, and His161.

Belongs to the cholesterol 7-desaturase family. The cofactor is [2Fe-2S] cluster. Expressed predominantly in the prothoracic gland and weakly in brain and malpighian tubules.

It is found in the membrane. It carries out the reaction cholesterol + NADPH + O2 + H(+) = 7-dehydrocholesterol + NADP(+) + 2 H2O. The enzyme catalyses cholesterol + NADH + O2 + H(+) = 7-dehydrocholesterol + NAD(+) + 2 H2O. It functions in the pathway steroid hormone biosynthesis; dafachronic acid biosynthesis. In terms of biological role, catalyzes the production of 7-dehydrocholesterol (7-DHC or cholesta-5,7-dien-3beta-ol) by inserting a double bond (desaturating) at the C7-C8 single bond of cholesterol. Essential regulator of steroid biosynthesis, as this reaction is the first step in the synthesis of the steroid hormone Delta(7)-dafachronic acid. Required for insect molting, metamorphosis and body growth throughout development via the regulation of ecdysteroid biosynthesis in the prothoracic gland. In Drosophila melanogaster (Fruit fly), this protein is Cholesterol 7-desaturase nvd.